The sequence spans 215 residues: MLAFSDMNTGAGKIENGKKALKIVVVGDGAVGKTCLLLAFSKGEIPTAYVPTVFENFSHVMKYKNEEFILHLWDTAGQEEYDRLRPLSYADSDVVLLCFAVNNRTSFDNISTKWEPEIKHYIDTAKTVLVGLKVDLRKDGSDDVTKQEGDDLCQKLGCVAYIEASSVAKIGLNEVFEKSVDCIFSNKPVPKASVTTQAKSQESTQQKKKSKCLLQ.

Residues Ala-30, Val-31, Gly-32, Lys-33, Thr-34, and Cys-35 each contribute to the GTP site. A Mg(2+)-binding site is contributed by Thr-34. 2 short sequence motifs (switch) span residues 43–54 (GEIPTAYVPTVF) and 74–93 (DTAG…ADSD). Thr-52 provides a ligand contact to Mg(2+). Positions 135 and 166 each coordinate GTP. A disordered region spans residues 194–215 (VTTQAKSQESTQQKKKSKCLLQ). Positions 195 to 204 (TTQAKSQEST) are enriched in low complexity. Positions 206–215 (QKKKSKCLLQ) are enriched in basic residues. Cys-212 is modified (cysteine methyl ester). A lipid anchor (S-geranylgeranyl cysteine) is attached at Cys-212. Residues 213-215 (LLQ) constitute a propeptide, removed in mature form.

This sequence belongs to the small GTPase superfamily. Rho family. In terms of assembly, interacts (GTP-bound form) with formin1 (via GBD/FH3 domain); the interaction activates formin1. Interacts (GTP-bound form) with profilin1. Interacts (GDP-bound form and when prenylated) with RhoGDI. Mg(2+) is required as a cofactor.

The protein resides in the cell membrane. The protein localises to the cytoplasm. Its subcellular location is the cytoskeleton. It localises to the cell projection. It is found in the phagocytic cup. The protein resides in the cytoplasmic vesicle. The protein localises to the phagosome. The catalysed reaction is GTP + H2O = GDP + phosphate + H(+). Its activity is regulated as follows. Regulated by guanine nucleotide exchange factors (GEFs) which promote the exchange of bound GDP for free GTP, GTPase activating proteins (GAPs) which increase the GTP hydrolysis activity and GDP dissociation inhibitors which inhibit the dissociation of the nucleotide from the GTPase. In terms of biological role, small GTPase which cycles between active GTP-bound and inactive GDP-bound states. Involved in actin cytoskeleton remodeling. Regulates phagocytosis by modulating actin cytoskeleton dynamics through the recruitment of formin1 and profilin1 to the phagocytosis nucleation site. This is Ras-like GTP-binding protein RHO1 from Entamoeba histolytica (strain ATCC 30459 / HM-1:IMSS / ABRM).